The chain runs to 746 residues: NAD(P)H-quinone oxidoreductase subunit 5, chloroplastic (746 aa).

16 consecutive transmembrane segments (helical) span residues 9–29, 40–60, 89–109, 125–145, 147–167, 185–205, 221–241, 258–278, 280–300, 327–347, 354–374, 396–416, 425–445, 547–567, 608–628, and 723–743; these read WIIP…LLLF, WTFL…YLSI, IDPL…LVLI, FAYM…SNLI, VYFF…FWFT, GDFG…SFEF, VNLL…IAKS, TPIS…FLVA, LLPL…IGII, LGYM…FHLI, ALLF…VGYS, TAFL…CFWS, LLFS…TAFY, ILFP…IGIP, FSVS…KPFY, and YLFL…FFYF.

Belongs to the complex I subunit 5 family. As to quaternary structure, NDH is composed of at least 16 different subunits, 5 of which are encoded in the nucleus.

The protein resides in the plastid. The protein localises to the chloroplast thylakoid membrane. It catalyses the reaction a plastoquinone + NADH + (n+1) H(+)(in) = a plastoquinol + NAD(+) + n H(+)(out). The enzyme catalyses a plastoquinone + NADPH + (n+1) H(+)(in) = a plastoquinol + NADP(+) + n H(+)(out). NDH shuttles electrons from NAD(P)H:plastoquinone, via FMN and iron-sulfur (Fe-S) centers, to quinones in the photosynthetic chain and possibly in a chloroplast respiratory chain. The immediate electron acceptor for the enzyme in this species is believed to be plastoquinone. Couples the redox reaction to proton translocation, and thus conserves the redox energy in a proton gradient. In Lepidium virginicum (Virginia pepperweed), this protein is NAD(P)H-quinone oxidoreductase subunit 5, chloroplastic (ndhF).